The following is a 56-amino-acid chain: Protein YqiD (56 aa).

Residues 2–22 (FIAWYWIVLIALVVVGYFLHL) form a helical membrane-spanning segment.

Its subcellular location is the cell inner membrane. The sequence is that of Protein YqiD from Escherichia coli (strain K12).